We begin with the raw amino-acid sequence, 148 residues long: Large ribosomal subunit protein bL9 (148 aa).

It belongs to the bacterial ribosomal protein bL9 family.

Functionally, binds to the 23S rRNA. The protein is Large ribosomal subunit protein bL9 of Syntrophotalea carbinolica (strain DSM 2380 / NBRC 103641 / GraBd1) (Pelobacter carbinolicus).